The chain runs to 338 residues: NADPH dehydrogenase (338 aa).

An FMN-binding site is contributed by 22-25; sequence SPMC. Tyrosine 27 contributes to the substrate binding site. Residues alanine 59 and glutamine 101 each contribute to the FMN site. 163–166 serves as a coordination point for substrate; it reads HAAH. Residues arginine 214 and 306-307 each bind FMN; that span reads GR.

It belongs to the NADH:flavin oxidoreductase/NADH oxidase family. NamA subfamily. In terms of assembly, homotetramer. The cofactor is FMN.

The enzyme catalyses A + NADPH + H(+) = AH2 + NADP(+). In terms of biological role, catalyzes the reduction of the double bond of an array of alpha,beta-unsaturated aldehydes and ketones. It also reduces the nitro group of nitroester and nitroaromatic compounds. It could have a role in detoxification processes. This Listeria monocytogenes serovar 1/2a (strain ATCC BAA-679 / EGD-e) protein is NADPH dehydrogenase.